The following is a 161-amino-acid chain: 2-C-methyl-D-erythritol 2,4-cyclodiphosphate synthase (161 aa).

A divalent metal cation-binding residues include D10 and H12. 4-CDP-2-C-methyl-D-erythritol 2-phosphate-binding positions include 10-12 and 36-37; these read DVH and HS. A divalent metal cation is bound at residue H44. 4-CDP-2-C-methyl-D-erythritol 2-phosphate-binding positions include 58–60, 63–67, 134–137, F141, and R144; these read DIG, FPDTD, and TTTE.

The protein belongs to the IspF family. Homotrimer. A divalent metal cation serves as cofactor.

It catalyses the reaction 4-CDP-2-C-methyl-D-erythritol 2-phosphate = 2-C-methyl-D-erythritol 2,4-cyclic diphosphate + CMP. It participates in isoprenoid biosynthesis; isopentenyl diphosphate biosynthesis via DXP pathway; isopentenyl diphosphate from 1-deoxy-D-xylulose 5-phosphate: step 4/6. In terms of biological role, involved in the biosynthesis of isopentenyl diphosphate (IPP) and dimethylallyl diphosphate (DMAPP), two major building blocks of isoprenoid compounds. Catalyzes the conversion of 4-diphosphocytidyl-2-C-methyl-D-erythritol 2-phosphate (CDP-ME2P) to 2-C-methyl-D-erythritol 2,4-cyclodiphosphate (ME-CPP) with a corresponding release of cytidine 5-monophosphate (CMP). This chain is 2-C-methyl-D-erythritol 2,4-cyclodiphosphate synthase, found in Shewanella putrefaciens (strain CN-32 / ATCC BAA-453).